A 344-amino-acid chain; its full sequence is Acetylpolyamine amidohydrolase 2 (344 aa).

Residue His-159 is the Proton donor/acceptor of the active site. Zn(2+) contacts are provided by Asp-195, His-197, and Asp-284.

The protein belongs to the histone deacetylase family. As to quaternary structure, homodimer. The cofactor is Zn(2+).

It carries out the reaction N-acetylputrescine + H2O = putrescine + acetate. It catalyses the reaction N-acetylcadaverine + H2O = cadaverine + acetate. It participates in amine and polyamine metabolism. Functionally, catalyzes the deacetylation of acetylated polyamines such as N-acetylputrescine and N-acetylcadaverine. Plays an important role in the metabolism of acetylated polyamines in P.aeruginosa. Is involved in the degradation pathways of N-acetylputrescine and N-acetylcadaverine, that allow P.aeruginosa to utilize these acetylpolyamines as a carbon source under glucose starvation. Shows nearly no activity against N(1)-acetylspermine and N(1)-acetylspermidine. Can also hydrolyze artificial trifluoroacetylated lysine-derivative, and to a lesser extent, acetylated lysine-derivative. The protein is Acetylpolyamine amidohydrolase 2 of Pseudomonas aeruginosa (strain ATCC 15692 / DSM 22644 / CIP 104116 / JCM 14847 / LMG 12228 / 1C / PRS 101 / PAO1).